A 590-amino-acid polypeptide reads, in one-letter code: Acetolactate synthase large subunit (590 aa).

Glu-61 is a thiamine diphosphate binding site. FAD is bound by residues Arg-163, 271–292 (HGTAYANFAVSECDLLIALGAR), and 314–333 (DIDPAEVGKNRIPQVAIVGD). Positions 405–484 (QHQMWSAQFL…VKIIIINNRW (80 aa)) are thiamine pyrophosphate binding. Mg(2+) is bound by residues Asp-455 and Asn-482.

Belongs to the TPP enzyme family. Dimer of large and small chains. Mg(2+) serves as cofactor. The cofactor is thiamine diphosphate.

It localises to the plastid. The protein resides in the chloroplast. The catalysed reaction is 2 pyruvate + H(+) = (2S)-2-acetolactate + CO2. Its pathway is amino-acid biosynthesis; L-isoleucine biosynthesis; L-isoleucine from 2-oxobutanoate: step 1/4. The protein operates within amino-acid biosynthesis; L-valine biosynthesis; L-valine from pyruvate: step 1/4. The chain is Acetolactate synthase large subunit (ilvB) from Pyropia yezoensis (Susabi-nori).